A 377-amino-acid polypeptide reads, in one-letter code: Ribosomal RNA large subunit methyltransferase G (377 aa).

It belongs to the methyltransferase superfamily. RlmG family.

The protein localises to the cytoplasm. It catalyses the reaction guanosine(1835) in 23S rRNA + S-adenosyl-L-methionine = N(2)-methylguanosine(1835) in 23S rRNA + S-adenosyl-L-homocysteine + H(+). In terms of biological role, specifically methylates the guanine in position 1835 (m2G1835) of 23S rRNA. The protein is Ribosomal RNA large subunit methyltransferase G of Streptomyces coelicolor (strain ATCC BAA-471 / A3(2) / M145).